A 250-amino-acid polypeptide reads, in one-letter code: MTESTDKTTHFGYQTVREDDKAGLVQGVFTNVASKYDIMNDLMSGGLHRVWKDAMMDWLAPRAAQRLLDVAGGTGDIAFRFLKRAPEAEAVVLDLTESMLIAGRQRAEAEALDARLNWLVGDAMALPFADNSFDVYTISFGIRNVTRIPDALAEAYRVLRPGGRLMVLEFSQLPNPGLQKAYDLYSFNVIPPMGKVVTNDRDSYQYLVESIRRFPDQESFASMIRTAGFDQVKYRNLTFGVAALHSGWKL.

S-adenosyl-L-methionine is bound by residues T74, D94, 122 to 123 (DA), and S139.

The protein belongs to the class I-like SAM-binding methyltransferase superfamily. MenG/UbiE family.

The catalysed reaction is a 2-demethylmenaquinol + S-adenosyl-L-methionine = a menaquinol + S-adenosyl-L-homocysteine + H(+). It catalyses the reaction a 2-methoxy-6-(all-trans-polyprenyl)benzene-1,4-diol + S-adenosyl-L-methionine = a 5-methoxy-2-methyl-3-(all-trans-polyprenyl)benzene-1,4-diol + S-adenosyl-L-homocysteine + H(+). It functions in the pathway quinol/quinone metabolism; menaquinone biosynthesis; menaquinol from 1,4-dihydroxy-2-naphthoate: step 2/2. It participates in cofactor biosynthesis; ubiquinone biosynthesis. Methyltransferase required for the conversion of demethylmenaquinol (DMKH2) to menaquinol (MKH2) and the conversion of 2-polyprenyl-6-methoxy-1,4-benzoquinol (DDMQH2) to 2-polyprenyl-3-methyl-6-methoxy-1,4-benzoquinol (DMQH2). The polypeptide is Ubiquinone/menaquinone biosynthesis C-methyltransferase UbiE (Dinoroseobacter shibae (strain DSM 16493 / NCIMB 14021 / DFL 12)).